The following is a 365-amino-acid chain: Sulfotransferase 2B1 (365 aa).

Residue 70 to 75 (KSGTTW) participates in 3'-phosphoadenylyl sulfate binding. Substrate contacts are provided by W98, W103, and H125. H125 acts as the Proton acceptor in catalysis. Residues R147, S155, Y210, 244–249 (STFSAM), and 274–276 (RKG) contribute to the 3'-phosphoadenylyl sulfate site. The tract at residues 303 to 365 (GMPTFPWDED…ASETPHPRPS (63 aa)) is disordered. The segment covering 309 to 325 (WDEDPEEDGSPDPEPSP) has biased composition (acidic residues). The residue at position 348 (S348) is a Phosphoserine.

The protein belongs to the sulfotransferase 1 family. In terms of processing, phosphorylated. In terms of tissue distribution, expressed in the stratum granulosum-stratum corneum junction in the skin (at protein level). Expressed highly in placenta, prostate and trachea and lower expression in the small intestine and lung.

The protein localises to the cytoplasm. It is found in the cytosol. Its subcellular location is the microsome. The protein resides in the nucleus. It carries out the reaction an alcohol + 3'-phosphoadenylyl sulfate = an alkyl sulfate + adenosine 3',5'-bisphosphate + H(+). It catalyses the reaction 3beta-hydroxyandrost-5-en-17-one + 3'-phosphoadenylyl sulfate = dehydroepiandrosterone 3-sulfate + adenosine 3',5'-bisphosphate + H(+). The catalysed reaction is (24S)-hydroxycholesterol + 3'-phosphoadenylyl sulfate = (24S)-hydroxycholesterol 3-sulfate + adenosine 3',5'-bisphosphate + H(+). The enzyme catalyses cholesterol + 3'-phosphoadenylyl sulfate = cholesterol sulfate + adenosine 3',5'-bisphosphate + H(+). It carries out the reaction pregnenolone + 3'-phosphoadenylyl sulfate = pregnenolone sulfate + adenosine 3',5'-bisphosphate + H(+). Functionally, sulfotransferase that utilizes 3'-phospho-5'-adenylyl sulfate (PAPS) as sulfonate donor to catalyze the sulfate conjugation. Responsible for the sulfation of cholesterol. Catalyzes sulfation of the 3beta-hydroxyl groups of steroids, such as, pregnenolone and dehydroepiandrosterone (DHEA). Preferentially sulfonates cholesterol, while it also has significant activity with pregnenolone and DHEA. Plays a role in epidermal cholesterol metabolism and in the regulation of epidermal proliferation and differentiation. In terms of biological role, sulfonates pregnenolone but not cholesterol. The protein is Sulfotransferase 2B1 (SULT2B1) of Homo sapiens (Human).